A 260-amino-acid polypeptide reads, in one-letter code: Cytochrome c oxidase subunit 2 (260 aa).

Residues 1 to 43 are Mitochondrial intermembrane-facing; the sequence is MILRSLSCRFLTIALCDAAEPWQLGFQDAATPMMQGIIDLHHD. A helical membrane pass occupies residues 44–64; sequence IFFFLILILVFVLWMLVRALW. Residues 65 to 84 are Mitochondrial matrix-facing; sequence HFNEQTNPIPQRIVHGTTIE. A helical transmembrane segment spans residues 85–105; it reads IIWTIFPSVILLFIAIPSFAL. The Mitochondrial intermembrane portion of the chain corresponds to 106 to 260; sequence LYSMDGVLVD…VSNQLILQTN (155 aa). Residues His-189, Cys-224, Glu-226, Cys-228, His-232, and Met-235 each coordinate Cu cation. Glu-226 contacts Mg(2+).

The protein belongs to the cytochrome c oxidase subunit 2 family. Component of the cytochrome c oxidase (complex IV, CIV), a multisubunit enzyme composed of a catalytic core of 3 subunits and several supernumerary subunits. The complex exists as a monomer or a dimer and forms supercomplexes (SCs) in the inner mitochondrial membrane with ubiquinol-cytochrome c oxidoreductase (cytochrome b-c1 complex, complex III, CIII). Cu cation serves as cofactor.

The protein resides in the mitochondrion inner membrane. The enzyme catalyses 4 Fe(II)-[cytochrome c] + O2 + 8 H(+)(in) = 4 Fe(III)-[cytochrome c] + 2 H2O + 4 H(+)(out). In terms of biological role, component of the cytochrome c oxidase, the last enzyme in the mitochondrial electron transport chain which drives oxidative phosphorylation. The respiratory chain contains 3 multisubunit complexes succinate dehydrogenase (complex II, CII), ubiquinol-cytochrome c oxidoreductase (cytochrome b-c1 complex, complex III, CIII) and cytochrome c oxidase (complex IV, CIV), that cooperate to transfer electrons derived from NADH and succinate to molecular oxygen, creating an electrochemical gradient over the inner membrane that drives transmembrane transport and the ATP synthase. Cytochrome c oxidase is the component of the respiratory chain that catalyzes the reduction of oxygen to water. Electrons originating from reduced cytochrome c in the intermembrane space (IMS) are transferred via the dinuclear copper A center (CU(A)) of subunit 2 and heme A of subunit 1 to the active site in subunit 1, a binuclear center (BNC) formed by heme A3 and copper B (CU(B)). The BNC reduces molecular oxygen to 2 water molecules using 4 electrons from cytochrome c in the IMS and 4 protons from the mitochondrial matrix. The protein is Cytochrome c oxidase subunit 2 (COX2) of Triticum aestivum (Wheat).